The primary structure comprises 351 residues: Putative [LysW]-L-2-aminoadipate/[LysW]-L-glutamate phosphate reductase (351 aa).

Residues 10 to 13 (SGFT) and 34 to 36 (SRK) each bind NADP(+). Residue C151 is part of the active site. N318 serves as a coordination point for NADP(+).

This sequence belongs to the NAGSA dehydrogenase family. Type 1 subfamily. LysY sub-subfamily.

It localises to the cytoplasm. It carries out the reaction [amino-group carrier protein]-C-terminal-N-(1-carboxy-5-oxopentan-1-yl)-L-glutamine + phosphate + NADP(+) = [amino-group carrier protein]-C-terminal-N-(1-carboxy-5-phosphooxy-5-oxopentan-1-yl)-L-glutamine + NADPH + H(+). The catalysed reaction is [amino-group carrier protein]-C-terminal-gamma-(L-glutamyl-5-semialdehyde)-L-glutamate + phosphate + NADP(+) = [amino-group carrier protein]-C-terminal-gamma-(5-phospho-L-glutamyl)-L-glutamate + NADPH + H(+). The protein operates within amino-acid biosynthesis; L-lysine biosynthesis via AAA pathway; L-lysine from L-alpha-aminoadipate (Thermus route): step 3/5. Its pathway is amino-acid biosynthesis; L-arginine biosynthesis. In terms of biological role, involved in both the arginine and lysine biosynthetic pathways. This is Putative [LysW]-L-2-aminoadipate/[LysW]-L-glutamate phosphate reductase from Pyrobaculum calidifontis (strain DSM 21063 / JCM 11548 / VA1).